Reading from the N-terminus, the 351-residue chain is Ferrochelatase (351 aa).

Residues His-184 and Glu-265 each contribute to the Fe cation site.

Belongs to the ferrochelatase family.

It is found in the cytoplasm. The enzyme catalyses heme b + 2 H(+) = protoporphyrin IX + Fe(2+). It participates in porphyrin-containing compound metabolism; protoheme biosynthesis; protoheme from protoporphyrin-IX: step 1/1. Catalyzes the ferrous insertion into protoporphyrin IX. The chain is Ferrochelatase from Rhodopirellula baltica (strain DSM 10527 / NCIMB 13988 / SH1).